The sequence spans 173 residues: Interferon gamma (173 aa).

A signal peptide spans 1-22; sequence MNATHCILALQLCLLAISGCSS. At glutamine 23 the chain carries Pyrrolidone carboxylic acid. 2 N-linked (GlcNAc...) asparagine glycosylation sites follow: asparagine 38 and asparagine 105.

This sequence belongs to the type II (or gamma) interferon family. As to quaternary structure, homodimer. Interacts with IFNGR1 (via extracellular domain); this interaction promotes IFNGR1 dimerization. In terms of tissue distribution, released primarily from activated T lymphocytes.

It localises to the secreted. Functionally, type II interferon produced by immune cells such as T-cells and NK cells that plays crucial roles in antimicrobial, antiviral, and antitumor responses by activating effector immune cells and enhancing antigen presentation. Primarily signals through the JAK-STAT pathway after interaction with its receptor IFNGR1 to affect gene regulation. Upon IFNG binding, IFNGR1 intracellular domain opens out to allow association of downstream signaling components JAK2, JAK1 and STAT1, leading to STAT1 activation, nuclear translocation and transcription of IFNG-regulated genes. Many of the induced genes are transcription factors such as IRF1 that are able to further drive regulation of a next wave of transcription. Plays a role in class I antigen presentation pathway by inducing a replacement of catalytic proteasome subunits with immunoproteasome subunits. In turn, increases the quantity, quality, and repertoire of peptides for class I MHC loading. Increases the efficiency of peptide generation also by inducing the expression of activator PA28 that associates with the proteasome and alters its proteolytic cleavage preference. Up-regulates as well MHC II complexes on the cell surface by promoting expression of several key molecules such as cathepsins B/CTSB, H/CTSH, and L/CTSL. Participates in the regulation of hematopoietic stem cells during development and under homeostatic conditions by affecting their development, quiescence, and differentiation. This chain is Interferon gamma (IFNG), found in Meriones unguiculatus (Mongolian jird).